The primary structure comprises 264 residues: Cell cycle regulator CcrZ (264 aa).

Residues F32, W70, and G73 each contribute to the ATP site. The Brenner's motif [HXDhX3N] signature appears at 157–164; it reads HGDVRHSN. The Proton acceptor role is filled by D159. Positions 173 to 196 match the APH motif; it reads IYLVDWDSVRLTDRMFDVAHMLCH.

It belongs to the aminoglycoside phosphotransferase family. In terms of assembly, monomer in solution. Interacts with DnaA (via domains I (1-82) and III (111-326)). Interacts with DnaB. Interacts with FtsZ; the interaction is direct and ensures correct localization during the cell cycle.

It is found in the cytoplasm. The catalysed reaction is D-ribose + ATP = D-ribose 5-phosphate + ADP + H(+). It catalyses the reaction 2-deoxy-D-ribose + ATP = 2-deoxy-D-ribose 5-phosphate + ADP + H(+). Its function is as follows. Plays a role in cell cycle regulation and chromosome integrity. Activates DnaA-dependent chromosomal DNA replication initiation ensuring that the chromosome is replicated at the right time during the cell cycle. May regulate replication initiation through phosphorylation of a possible second messenger or metabolite, and by interacting with replication initiation proteins. Has ATPase activity with D-ribose and 2-deoxy-D-ribose in vitro, but not with choline. Involved in DNA damage response. The polypeptide is Cell cycle regulator CcrZ (Streptococcus pneumoniae serotype 2 (strain D39 / NCTC 7466)).